The sequence spans 200 residues: Dephospho-CoA kinase (200 aa).

One can recognise a DPCK domain in the interval 3 to 200 (IFGLTGGIGS…LNVNNKCNMD (198 aa)). 11–16 (GSGKSL) contacts ATP.

This sequence belongs to the CoaE family.

It is found in the cytoplasm. The enzyme catalyses 3'-dephospho-CoA + ATP = ADP + CoA + H(+). It functions in the pathway cofactor biosynthesis; coenzyme A biosynthesis; CoA from (R)-pantothenate: step 5/5. Functionally, catalyzes the phosphorylation of the 3'-hydroxyl group of dephosphocoenzyme A to form coenzyme A. This is Dephospho-CoA kinase from Ehrlichia canis (strain Jake).